An 87-amino-acid polypeptide reads, in one-letter code: Small ribosomal subunit protein uS15 (87 aa).

Belongs to the universal ribosomal protein uS15 family. In terms of assembly, part of the 30S ribosomal subunit. Forms a bridge to the 50S subunit in the 70S ribosome, contacting the 23S rRNA.

Its function is as follows. One of the primary rRNA binding proteins, it binds directly to 16S rRNA where it helps nucleate assembly of the platform of the 30S subunit by binding and bridging several RNA helices of the 16S rRNA. In terms of biological role, forms an intersubunit bridge (bridge B4) with the 23S rRNA of the 50S subunit in the ribosome. This chain is Small ribosomal subunit protein uS15, found in Alkaliphilus oremlandii (strain OhILAs) (Clostridium oremlandii (strain OhILAs)).